The chain runs to 244 residues: Small ribosomal subunit protein uS3 (244 aa).

Positions 39–107 constitute a KH type-2 domain; it reads VREMLRKKLA…PAHINVTEVR (69 aa). Positions 213-244 are disordered; sequence VGQEKQDDSPRNDRNDRGDRGDRPSRPAREAR. Basic and acidic residues predominate over residues 216–244; sequence EKQDDSPRNDRNDRGDRGDRPSRPAREAR.

Belongs to the universal ribosomal protein uS3 family. As to quaternary structure, part of the 30S ribosomal subunit. Forms a tight complex with proteins S10 and S14.

Functionally, binds the lower part of the 30S subunit head. Binds mRNA in the 70S ribosome, positioning it for translation. The polypeptide is Small ribosomal subunit protein uS3 (Xanthomonas oryzae pv. oryzae (strain MAFF 311018)).